The primary structure comprises 154 residues: Urease accessory protein UreE (154 aa).

It belongs to the UreE family.

The protein localises to the cytoplasm. Involved in urease metallocenter assembly. Binds nickel. Probably functions as a nickel donor during metallocenter assembly. The protein is Urease accessory protein UreE of Rhizobium meliloti (strain 1021) (Ensifer meliloti).